Here is a 185-residue protein sequence, read N- to C-terminus: Ribosome-recycling factor (185 aa).

It belongs to the RRF family.

It is found in the cytoplasm. Its function is as follows. Responsible for the release of ribosomes from messenger RNA at the termination of protein biosynthesis. May increase the efficiency of translation by recycling ribosomes from one round of translation to another. The sequence is that of Ribosome-recycling factor from Geotalea daltonii (strain DSM 22248 / JCM 15807 / FRC-32) (Geobacter daltonii).